A 280-amino-acid polypeptide reads, in one-letter code: UPF0276 protein CC_3255 (280 aa).

The protein belongs to the UPF0276 family.

This Caulobacter vibrioides (strain ATCC 19089 / CIP 103742 / CB 15) (Caulobacter crescentus) protein is UPF0276 protein CC_3255.